A 274-amino-acid polypeptide reads, in one-letter code: DNA-directed RNA polymerase subunit Rpo3 (274 aa).

[3Fe-4S] cluster is bound by residues Cys202, Cys205, and Cys208.

Belongs to the archaeal Rpo3/eukaryotic RPB3 RNA polymerase subunit family. As to quaternary structure, part of the RNA polymerase complex. The cofactor is [3Fe-4S] cluster.

The protein localises to the cytoplasm. The enzyme catalyses RNA(n) + a ribonucleoside 5'-triphosphate = RNA(n+1) + diphosphate. Functionally, DNA-dependent RNA polymerase (RNAP) catalyzes the transcription of DNA into RNA using the four ribonucleoside triphosphates as substrates. This is DNA-directed RNA polymerase subunit Rpo3 from Methanobrevibacter smithii (strain ATCC 35061 / DSM 861 / OCM 144 / PS).